Consider the following 123-residue polypeptide: MHYCNKDIGSFGETIAVDYIKNCGYIILERNFRCKLGEIDIIAKDKNFIVFIEVKTRYSYIYGSPSEAITFRKQNKIYKTAQLYIIKKAIHNKFYFRFDVIEVILNTLNSNYSVKLIKNAFQI.

Belongs to the UPF0102 family.

The polypeptide is UPF0102 protein CLD_2200 (Clostridium botulinum (strain Okra / Type B1)).